Here is a 119-residue protein sequence, read N- to C-terminus: Protein TusC (119 aa).

The protein belongs to the DsrF/TusC family. Heterohexamer, formed by a dimer of trimers. The hexameric TusBCD complex contains 2 copies each of TusB, TusC and TusD. The TusBCD complex interacts with TusE.

It localises to the cytoplasm. Its function is as follows. Part of a sulfur-relay system required for 2-thiolation of 5-methylaminomethyl-2-thiouridine (mnm(5)s(2)U) at tRNA wobble positions. The protein is Protein TusC of Photorhabdus laumondii subsp. laumondii (strain DSM 15139 / CIP 105565 / TT01) (Photorhabdus luminescens subsp. laumondii).